The following is a 574-amino-acid chain: Amino-acid acetyltransferase, mitochondrial (574 aa).

The transit peptide at 1-13 directs the protein to the mitochondrion; the sequence is MWRRIFAHGLKYD. In terms of domain architecture, N-acetyltransferase spans 392–560; sequence KGAKPSNNSP…KRLREFMRSV (169 aa).

It belongs to the acetyltransferase family. As to quaternary structure, interacts with the acetylglutamate kinase chain of AGR5,6.

The protein resides in the mitochondrion. The catalysed reaction is L-glutamate + acetyl-CoA = N-acetyl-L-glutamate + CoA + H(+). It functions in the pathway amino-acid biosynthesis; L-arginine biosynthesis; N(2)-acetyl-L-ornithine from L-glutamate: step 1/4. With respect to regulation, feedback inhibition by L-arginine. In terms of biological role, N-acetylglutamate synthase involved in arginine biosynthesis. This chain is Amino-acid acetyltransferase, mitochondrial (ARG2), found in Saccharomyces cerevisiae (strain YJM789) (Baker's yeast).